Consider the following 663-residue polypeptide: Glucans biosynthesis glucosyltransferase H (663 aa).

The next 6 membrane-spanning stretches (helical) occupy residues 64 to 86 (WMLG…DTIA), 101 to 123 (LAPL…VVLM), 413 to 435 (LVIG…AGLI), 470 to 492 (AWAM…ILVL), 558 to 580 (EAWA…FWFT), and 584 to 606 (LTAT…LGAH).

This sequence belongs to the glycosyltransferase 2 family. OpgH subfamily.

It localises to the cell inner membrane. It functions in the pathway glycan metabolism; osmoregulated periplasmic glucan (OPG) biosynthesis. Functionally, involved in the biosynthesis of osmoregulated periplasmic glucans (OPGs). This chain is Glucans biosynthesis glucosyltransferase H, found in Caulobacter vibrioides (strain ATCC 19089 / CIP 103742 / CB 15) (Caulobacter crescentus).